The chain runs to 328 residues: Testis-specific serine/threonine-protein kinase 4 (328 aa).

In terms of domain architecture, Protein kinase spans 25–293 (YEVGKAIGHG…ILDIIKDSWV (269 aa)). ATP is bound by residues 31-39 (IGHGSYGSV) and Lys54. Asp148 functions as the Proton acceptor in the catalytic mechanism. Position 197 is a phosphothreonine (Thr197).

It belongs to the protein kinase superfamily. CAMK Ser/Thr protein kinase family. In terms of assembly, homodimer. Interacts with HSP90; this interaction stabilizes and activates TSSK4. Interacts with ODF2 (via C-terminus); this interaction promotes ODF2 phosphorylation on 'Ser-95'. May interact with CREM. Interacts with CREB1; this interaction facilitates phosphorylation on 'Ser-133'. Interacts with QRICH2. Mg(2+) serves as cofactor. In terms of processing, activated by autophosphorylation on Thr-197. ODF2 potentiates the autophosphorylation activity of TSSK4 at Thr-197. Ubiquitinated; HSP90 activity negatively regulates ubiquitination and degradation. As to expression, expressed only in the testis.

It is found in the cytoplasmic vesicle. The protein resides in the secretory vesicle. The protein localises to the acrosome. Its subcellular location is the cell projection. It localises to the cilium. It is found in the flagellum. It carries out the reaction L-seryl-[protein] + ATP = O-phospho-L-seryl-[protein] + ADP + H(+). The catalysed reaction is L-threonyl-[protein] + ATP = O-phospho-L-threonyl-[protein] + ADP + H(+). Its activity is regulated as follows. Activated by phosphorylation on Thr-197. In terms of biological role, serine/threonine kinase which is involved in male germ cell development and in mature sperm function. May be involved in the Cre/Creb signaling pathway. Phosphorylates CREB1 on 'Ser-133' in vitro and can stimulate Cre/Creb pathway in cells. Phosphorylates CREM on 'Ser-116' in vitro. Phosphorylates ODF2 on 'Ser-95'. The chain is Testis-specific serine/threonine-protein kinase 4 from Homo sapiens (Human).